The chain runs to 189 residues: Ras-like protein rasC (189 aa).

A GTP-binding site is contributed by 11-18 (GDGGVGKS). Residues 33-41 (YDPTIENSY) carry the Effector region motif. Residues 58–62 (DTAGQ) and 117–120 (NKAD) contribute to the GTP site. A Cysteine methyl ester modification is found at cysteine 186. Cysteine 186 carries S-geranylgeranyl cysteine lipidation. A propeptide spans 187–189 (IIL) (removed in mature form).

It belongs to the small GTPase superfamily. Ras family.

The protein resides in the cell membrane. It catalyses the reaction GTP + H2O = GDP + phosphate + H(+). With respect to regulation, alternates between an inactive form bound to GDP and an active form bound to GTP. Activated by a guanine nucleotide-exchange factor (GEF) and inactivated by a GTPase-activating protein (GAP). In terms of biological role, ras proteins bind GDP/GTP and possess intrinsic GTPase activity. This is Ras-like protein rasC (rasC) from Dictyostelium discoideum (Social amoeba).